We begin with the raw amino-acid sequence, 104 residues long: UPF0213 protein plu4503 (104 aa).

One can recognise a GIY-YIG domain in the interval 4 to 79 (NQWVLYLLKT…KQLSKQQKER (76 aa)).

It belongs to the UPF0213 family.

The polypeptide is UPF0213 protein plu4503 (Photorhabdus laumondii subsp. laumondii (strain DSM 15139 / CIP 105565 / TT01) (Photorhabdus luminescens subsp. laumondii)).